Here is a 202-residue protein sequence, read N- to C-terminus: ATP-dependent Clp protease proteolytic subunit (202 aa).

Ser-98 serves as the catalytic Nucleophile. Residue His-123 is part of the active site.

Belongs to the peptidase S14 family. In terms of assembly, fourteen ClpP subunits assemble into 2 heptameric rings which stack back to back to give a disk-like structure with a central cavity, resembling the structure of eukaryotic proteasomes.

It localises to the cytoplasm. It carries out the reaction Hydrolysis of proteins to small peptides in the presence of ATP and magnesium. alpha-casein is the usual test substrate. In the absence of ATP, only oligopeptides shorter than five residues are hydrolyzed (such as succinyl-Leu-Tyr-|-NHMec, and Leu-Tyr-Leu-|-Tyr-Trp, in which cleavage of the -Tyr-|-Leu- and -Tyr-|-Trp bonds also occurs).. In terms of biological role, cleaves peptides in various proteins in a process that requires ATP hydrolysis. Has a chymotrypsin-like activity. Plays a major role in the degradation of misfolded proteins. This chain is ATP-dependent Clp protease proteolytic subunit, found in Desulfovibrio desulfuricans (strain ATCC 27774 / DSM 6949 / MB).